The sequence spans 376 residues: Protein RecA (376 aa).

Residue 66–73 participates in ATP binding; sequence GPESSGKT. Positions 329-376 are disordered; it reads VGVKPEDLTAEPGADAAGAAADAEAPAKSVPAPAAKSAKGSKAAAAKS. Residues 338–376 are compositionally biased toward low complexity; the sequence is AEPGADAAGAAADAEAPAKSVPAPAAKSAKGSKAAAAKS.

Belongs to the RecA family.

It localises to the cytoplasm. Can catalyze the hydrolysis of ATP in the presence of single-stranded DNA, the ATP-dependent uptake of single-stranded DNA by duplex DNA, and the ATP-dependent hybridization of homologous single-stranded DNAs. It interacts with LexA causing its activation and leading to its autocatalytic cleavage. The polypeptide is Protein RecA (Streptomyces rimosus).